The following is an 891-amino-acid chain: Shieldin complex subunit 2 (891 aa).

Residues 1–61 form a sufficient for interaction with SHLD3 and MAD2L2 region; that stretch reads MSQGSQVHIF…AGDQEFKNLE (61 aa). The interaction with ASTE1 stretch occupies residues 1 to 542; that stretch reads MSQGSQVHIF…TYVSTKHSYL (542 aa). Disordered stretches follow at residues 184-222, 260-294, and 333-357; these read MSTGTKPEPTGHRERQSQESFSDTRCEPQSEGAVRKASD, NMEAEPTGSQGVRRTEGDFSKPGGDFEEESENEQS, and NEENLPPNELCSSHPSTANRSWSCK. The segment covering 192–222 has biased composition (basic and acidic residues); it reads PTGHRERQSQESFSDTRCEPQSEGAVRKASD. 2 stretches are compositionally biased toward polar residues: residues 260–271 and 342–354; these read NMEAEPTGSQGV and LCSSHPSTANRSW. Positions 695-866 are mediates interaction with SHLD1; that stretch reads KYSGVVLIKA…QQDFSLLDFC (172 aa).

This sequence belongs to the SHLD2 family. Component of the shieldin complex, consisting of SHLD1, SHLD2, SHLD3 and MAD2L2/REV7. Within the complex, SHLD2 forms a scaffold which interacts with a SHLD3-MAD2L2 subcomplex via its N-terminus, and with SHLD1 via its C-terminus. Interacts with TP53BP1. Interacts with RIF1. Interacts with ASTE1.

The protein localises to the chromosome. Functionally, component of the shieldin complex, which plays an important role in repair of DNA double-stranded breaks (DSBs). During G1 and S phase of the cell cycle, the complex functions downstream of TP53BP1 to promote non-homologous end joining (NHEJ) and suppress DNA end resection. Mediates various NHEJ-dependent processes including immunoglobulin class-switch recombination, and fusion of unprotected telomeres. The chain is Shieldin complex subunit 2 from Mus musculus (Mouse).